The primary structure comprises 517 residues: Pseudaminic acid cytidylyltransferase and UDP-2,4-diacetamido-2,4,6-trideoxy-beta-L-altropyranose hydrolase (517 aa).

The tract at residues 1–208 (MRAIAIVLAR…ELSPLEVQDI (208 aa)) is pseudaminic acid cytidylyltransferase. Residues 209–517 (AHFRRFRISQ…EGALREFLEI (309 aa)) are UDP-2,4-diacetamido-2,4,6-trideoxy-beta-L-altropyranose hydrolase. His-244 serves as the catalytic Proton acceptor; for UDP-2,4-diacetamido-2,4,6-trideoxy-beta-L-altropyranose hydrolase activity.

This sequence in the N-terminal section; belongs to the CMP-NeuNAc synthase family. It in the C-terminal section; belongs to the PseG family. As to quaternary structure, monomer. Mg(2+) is required as a cofactor.

It catalyses the reaction UDP-2,4-diacetamido-2,4,6-trideoxy-beta-L-altrose + H2O = 2,4-diacetamido-2,4,6-trideoxy-beta-L-altrose + UDP + H(+). The catalysed reaction is pseudaminate + CTP = CMP-pseudaminate + diphosphate. Functionally, catalyzes the fourth and sixth steps in the biosynthesis of pseudaminic acid, a sialic-acid-like sugar that is used to modify flagellin. The C-terminus mediates the fourth step of the pathway and catalyzes the removal of UDP from C-1 of UDP-2,4-diacetamido-2,4,6-trideoxy-beta-L-altropyranose forming 2,4-diacetamido-2,4,6-trideoxy-beta-L-altropyranose. The N-terminal part mediates the last step of the pathway by mediating activation of pseudaminic acid with CMP by forming CMP-pseudaminic acid. The protein is Pseudaminic acid cytidylyltransferase and UDP-2,4-diacetamido-2,4,6-trideoxy-beta-L-altropyranose hydrolase of Helicobacter pylori (strain ATCC 700392 / 26695) (Campylobacter pylori).